Reading from the N-terminus, the 418-residue chain is Sprouty-related, EVH1 domain-containing protein 2 (418 aa).

The WH1 domain occupies 5–122 (THPDDDSYIV…RGVRKAIEDL (118 aa)). The tract at residues 127–171 (TTSSSTIHNEAELGDDDVFTTATDSSSNSSQKREQPTRTISSPTS) is disordered. Polar residues predominate over residues 146-156 (TTATDSSSNSS). In terms of domain architecture, KBD spans 201 to 257 (PYRQVSFPDDDEEIVRINPREKIWMTGYEDYRHAPVRGKYPDPSEDADSSYVRFAKG). Phosphoserine is present on serine 206. Tyrosine 228 and tyrosine 231 each carry phosphotyrosine. Residues 275–302 (GLGEDPKGRGGSVIKTQPSRGKSRRRKE) are disordered. An SPR domain is found at 308–416 (RCVYCRDMFN…CRCCGGKHKA (109 aa)).

In terms of assembly, homodimer and heterodimer. Able to interact with SPRED1 to form heterodimers. Interacts with RAS. May interact with ZDHHC13 (via ANK repeats) and ZDHHC17 (via ANK repeats). Interacts with TESK1. Interacts with NF1. In terms of processing, phosphorylated on serine and threonine residues. Phosphorylated on tyrosine. Phosphorylation of Tyr-228 and Tyr-231 are required for ubiquitination. Ubiquitinated; leading to degradation by the proteasome. As to expression, expressed in liver, skin, small intestine, salivary gland and prostate.

Its subcellular location is the cell membrane. The protein localises to the cytoplasmic vesicle. The protein resides in the secretory vesicle membrane. It is found in the cytoplasm. Negatively regulates Ras signaling pathways and downstream activation of MAP kinases. Recruits and translocates NF1 to the cell membrane, thereby enabling NF1-dependent hydrolysis of active GTP-bound Ras to inactive GDP-bound Ras. Inhibits fibroblast growth factor (FGF)-induced retinal lens fiber differentiation, probably by inhibiting FGF-mediated phosphorylation of ERK1/2. Inhibits TGFB-induced epithelial-to-mesenchymal transition in lens epithelial cells. This is Sprouty-related, EVH1 domain-containing protein 2 (SPRED2) from Homo sapiens (Human).